We begin with the raw amino-acid sequence, 82 residues long: Small ribosomal subunit protein bS18 (82 aa).

A disordered region spans residues 1 to 24; it reads MKRTNMKKARMEQSRRPKKNPLKA.

Belongs to the bacterial ribosomal protein bS18 family. In terms of assembly, part of the 30S ribosomal subunit. Forms a tight heterodimer with protein bS6.

Binds as a heterodimer with protein bS6 to the central domain of the 16S rRNA, where it helps stabilize the platform of the 30S subunit. The sequence is that of Small ribosomal subunit protein bS18 from Corynebacterium jeikeium (strain K411).